The chain runs to 200 residues: Cation channel sperm-associated auxiliary subunit zeta (200 aa).

The span at Met1–Asp29 shows a compositional bias: basic and acidic residues. 2 disordered regions span residues Met1–Trp31 and Asn58–Lys78.

Component of the CatSper complex or CatSpermasome composed of the core pore-forming members CATSPER1, CATSPER2, CATSPER3 and CATSPER4 as well as auxiliary members CATSPERB, CATSPERG, CATSPERD, CATSPERE, CATSPERZ, C2CD6/CATSPERT, TMEM249, TMEM262 and EFCAB9. HSPA1 may be an additional auxiliary complex member. The core complex members CATSPER1, CATSPER2, CATSPER3 and CATSPER4 form a heterotetrameric channel. The auxiliary CATSPERB, CATSPERG, CATSPERD and CATSPERE subunits form a pavilion-like structure over the pore which stabilizes the complex through interactions with CATSPER4, CATSPER3, CATSPER1 and CATSPER2 respectively. TMEM262/CATSPERH interacts with CATSPERB, further stabilizing the complex. C2CD6/CATSPERT interacts at least with CATSPERD and is required for targeting the CatSper complex in the flagellar membrane. Interacts with EFCAB9; the interaction is direct, Ca(2+)-dependent and connects EFCAB9 with the CatSper complex. Dissociates from EFCAB9 at elevated pH.

Its subcellular location is the cell projection. The protein localises to the cilium. It is found in the flagellum membrane. In terms of biological role, auxiliary component of the CatSper complex, a complex involved in sperm cell hyperactivation. Sperm cell hyperactivation is needed for sperm motility which is essential late in the preparation of sperm for fertilization. Required for a distribution of the CatSper complex in linear quadrilateral nanodomains along the flagellum, maximizing fertilization inside the mammalian female reproductive tract. Together with EFCAB9, associates with the CatSper channel pore and is required for the two-row structure of each single CatSper channel. This is Cation channel sperm-associated auxiliary subunit zeta from Homo sapiens (Human).